A 291-amino-acid chain; its full sequence is 33 kDa chaperonin (291 aa).

Intrachain disulfides connect Cys-237/Cys-239 and Cys-270/Cys-273.

This sequence belongs to the HSP33 family. Under oxidizing conditions two disulfide bonds are formed involving the reactive cysteines. Under reducing conditions zinc is bound to the reactive cysteines and the protein is inactive.

It is found in the cytoplasm. Redox regulated molecular chaperone. Protects both thermally unfolding and oxidatively damaged proteins from irreversible aggregation. Plays an important role in the bacterial defense system toward oxidative stress. The protein is 33 kDa chaperonin of Clostridioides difficile (strain 630) (Peptoclostridium difficile).